The sequence spans 20 residues: Venom protease (20 aa).

This sequence belongs to the peptidase S1 family. In terms of processing, contains 3 disulfide bonds. Post-translationally, N-glycosylated. As to expression, expressed by the venom duct.

It is found in the secreted. This Bombus terrestris (Buff-tailed bumblebee) protein is Venom protease.